Reading from the N-terminus, the 435-residue chain is GTPase Der (435 aa).

EngA-type G domains lie at 4–167 (PVVA…PEKD) and 175–350 (IRFS…DNHN). GTP-binding positions include 10–17 (GRPNVGKS), 57–61 (DTGGI), 119–122 (NKAD), 181–188 (GRPNVGKS), 228–232 (DTAGI), and 293–296 (NKWD). The region spanning 351 to 435 (KRVQSATLND…PIHLIERARK (85 aa)) is the KH-like domain.

The protein belongs to the TRAFAC class TrmE-Era-EngA-EngB-Septin-like GTPase superfamily. EngA (Der) GTPase family. Associates with the 50S ribosomal subunit.

Functionally, GTPase that plays an essential role in the late steps of ribosome biogenesis. The sequence is that of GTPase Der from Levilactobacillus brevis (strain ATCC 367 / BCRC 12310 / CIP 105137 / JCM 1170 / LMG 11437 / NCIMB 947 / NCTC 947) (Lactobacillus brevis).